Here is a 297-residue protein sequence, read N- to C-terminus: Tyrosine recombinase XerD (297 aa).

A Core-binding (CB) domain is found at 1-86 (MNDLIDDFLH…SLRSFFHYLM (86 aa)). Residues 107-291 (SLPKVLNLDD…TKLRLKDVYK (185 aa)) form the Tyr recombinase domain. Catalysis depends on residues Arg-147, Lys-171, His-243, Arg-246, and His-269. The active-site O-(3'-phospho-DNA)-tyrosine intermediate is the Tyr-278.

Belongs to the 'phage' integrase family. XerD subfamily. In terms of assembly, forms a cyclic heterotetrameric complex composed of two molecules of XerC and two molecules of XerD.

The protein localises to the cytoplasm. Its function is as follows. Site-specific tyrosine recombinase, which acts by catalyzing the cutting and rejoining of the recombining DNA molecules. The XerC-XerD complex is essential to convert dimers of the bacterial chromosome into monomers to permit their segregation at cell division. It also contributes to the segregational stability of plasmids. The polypeptide is Tyrosine recombinase XerD (Listeria innocua serovar 6a (strain ATCC BAA-680 / CLIP 11262)).